Reading from the N-terminus, the 161-residue chain is Large ribosomal subunit protein uL15 (161 aa).

A disordered region spans residues methionine 1 to asparagine 47. Over residues proline 23–isoleucine 35 the composition is skewed to gly residues.

It belongs to the universal ribosomal protein uL15 family. In terms of assembly, part of the 50S ribosomal subunit.

Binds to the 23S rRNA. The polypeptide is Large ribosomal subunit protein uL15 (Paracoccus denitrificans (strain Pd 1222)).